Reading from the N-terminus, the 468-residue chain is Glutamate--tRNA ligase (468 aa).

The 'HIGH' region motif lies at 8–18 (PSPTGFLHVGG). Residues C97, C99, C124, and D126 each contribute to the Zn(2+) site. The 'KMSKS' region signature appears at 236 to 240 (KLSKR). K239 lines the ATP pocket.

This sequence belongs to the class-I aminoacyl-tRNA synthetase family. Glutamate--tRNA ligase type 1 subfamily. As to quaternary structure, monomer. The cofactor is Zn(2+).

It localises to the cytoplasm. It carries out the reaction tRNA(Glu) + L-glutamate + ATP = L-glutamyl-tRNA(Glu) + AMP + diphosphate. Catalyzes the attachment of glutamate to tRNA(Glu) in a two-step reaction: glutamate is first activated by ATP to form Glu-AMP and then transferred to the acceptor end of tRNA(Glu). The polypeptide is Glutamate--tRNA ligase (Francisella tularensis subsp. novicida (strain U112)).